The chain runs to 445 residues: Rab GDP dissociation inhibitor beta (445 aa).

The residue at position 1 (methionine 1) is an N-acetylmethionine. An N6-succinyllysine modification is found at lysine 57. At lysine 112 the chain carries N6-acetyllysine. A Phosphoserine modification is found at serine 130. N6-acetyllysine is present on lysine 269. Serine 382 is modified (phosphoserine).

The protein belongs to the Rab GDI family. In terms of assembly, interacts with RHOH. Interacts with the GDP-bound inactive forms of RAB3A, RAB3B, RAB3C, RAB5A, RAB5B, RAB5C, RAB8A, RAB8B, RAB10, RAB12, RAB35, and RAB43; binds RAB3D to a lesser extent. Interacts with DZIP1; this interaction negatively regulates the interaction of GDI2 with GDP-bound RAB8A. In terms of tissue distribution, ubiquitously expressed.

The protein resides in the cytoplasm. The protein localises to the membrane. Its subcellular location is the golgi apparatus. It localises to the trans-Golgi network. In terms of biological role, GDP-dissociation inhibitor preventing the GDP to GTP exchange of most Rab proteins. By keeping these small GTPases in their inactive GDP-bound form regulates intracellular membrane trafficking. Negatively regulates protein transport to the cilium and ciliogenesis through the inhibition of RAB8A. The sequence is that of Rab GDP dissociation inhibitor beta (GDI2) from Bos taurus (Bovine).